We begin with the raw amino-acid sequence, 116 residues long: G antigen 2B/2C (116 aa).

Positions 1–116 (MSWRGRSTYR…PEEGEKQSQC (116 aa)) are disordered. Acidic residues-rich tracts occupy residues 31 to 44 (FSDE…EEGE) and 86 to 95 (ECEDGPDGQE). Residues 102–116 (EEVKTPEEGEKQSQC) are compositionally biased toward basic and acidic residues.

This sequence belongs to the GAGE family. Expressed in a variety of tumor tissues but not in normal tissues, except testis.

In terms of biological role, antigen, recognized on melanoma by autologous cytolytic T-lymphocytes. This is G antigen 2B/2C (GAGE2B) from Homo sapiens (Human).